The following is a 576-amino-acid chain: (+)-alpha-terpineol synthase (576 aa).

(2E)-geranyl diphosphate contacts are provided by Arg286, Asp323, Asp327, Arg466, and Asn469. Mg(2+)-binding residues include Asp323 and Asp327. A DDXXD motif motif is present at residues Asp323 to Asp327. The Mg(2+) site is built by Asn469, Thr473, and Glu477.

Belongs to the terpene synthase family. Tpsb subfamily. Requires Mg(2+) as cofactor. Mn(2+) is required as a cofactor.

The enzyme catalyses (2E)-geranyl diphosphate + H2O = (R)-alpha-terpineol + diphosphate. In terms of biological role, monoterpene synthase producing mainly (+)-alpha-terpineol (44%) and (-)-limonene (33.6%) and lower amounts of (E)-geraniol (5.9%), linalool (5.0%), myrcene (3.4%), (-)-alpha-pinene (3.3%), (+)-sabinene (3.0%) and alpha-terpinolene (1.6%). The sequence is that of (+)-alpha-terpineol synthase from Santalum album (White sandalwood).